We begin with the raw amino-acid sequence, 447 residues long: Glycerol-3-phosphate acyltransferase ATS11, chloroplastic (447 aa).

The interval 1 to 21 (MFILSSSSSLPSPLSLSSSRV) is disordered. The transit peptide at 1 to 48 (MFILSSSSSLPSPLSLSSSRVSLPPPSSSSLNLLPLSPHFQPPNLACS) directs the protein to the chloroplast. The HXXXXD motif signature appears at 217 to 222 (HQTEAD).

The protein belongs to the GPAT/DAPAT family.

Its subcellular location is the plastid. It localises to the chloroplast stroma. The catalysed reaction is a fatty acyl-[ACP] + sn-glycerol 3-phosphate = a 1-acyl-sn-glycero-3-phosphate + holo-[ACP]. It catalyses the reaction sn-glycerol 3-phosphate + an acyl-CoA = a 1-acyl-sn-glycero-3-phosphate + CoA. It functions in the pathway phospholipid metabolism; CDP-diacylglycerol biosynthesis; CDP-diacylglycerol from sn-glycerol 3-phosphate: step 1/3. Esterifies the acyl-group from acyl-acyl carrier proteins (acyl-ACPs) to the sn-1 position of glycerol-3-phosphate. The physiological acyl donors in chloroplasts are acyl-ACPs, but acyl-CoAs are used as artificial donor for in vitro reactions. The enzyme from chilling-resistant plants discriminates against non-fluid palmitic acid and selects oleic acid whereas the enzyme from sensitive plants accepts both fatty acids. Squash is chilling-sensitive. Preferably utilizes oleoyl groups (18:1-ACP) and has lower affinity to palmitoyl (16:0-ACP) and stearoyl groups (18:0-ACP). The polypeptide is Glycerol-3-phosphate acyltransferase ATS11, chloroplastic (Cucurbita moschata (Winter crookneck squash)).